The chain runs to 326 residues: Beta-ketoacyl-[acyl-carrier-protein] synthase III (326 aa).

Active-site residues include cysteine 111 and histidine 253. Positions 254 to 258 (QANSR) are ACP-binding. The active site involves asparagine 283.

This sequence belongs to the thiolase-like superfamily. FabH family. As to quaternary structure, homodimer.

It localises to the cytoplasm. The catalysed reaction is malonyl-[ACP] + acetyl-CoA + H(+) = 3-oxobutanoyl-[ACP] + CO2 + CoA. It functions in the pathway lipid metabolism; fatty acid biosynthesis. In terms of biological role, catalyzes the condensation reaction of fatty acid synthesis by the addition to an acyl acceptor of two carbons from malonyl-ACP. Catalyzes the first condensation reaction which initiates fatty acid synthesis and may therefore play a role in governing the total rate of fatty acid production. Possesses both acetoacetyl-ACP synthase and acetyl transacylase activities. Its substrate specificity determines the biosynthesis of branched-chain and/or straight-chain of fatty acids. This chain is Beta-ketoacyl-[acyl-carrier-protein] synthase III, found in Latilactobacillus sakei subsp. sakei (strain 23K) (Lactobacillus sakei subsp. sakei).